We begin with the raw amino-acid sequence, 550 residues long: Membrane protein insertase YidC (550 aa).

Transmembrane regions (helical) follow at residues 6-26, 333-353, 356-376, 430-450, 469-489, and 504-524; these read LVLFLVFSLSLVMLWNAWLKQ, VVDYGWLTVIAAPLFWVLSWI, VVGNWGWAIIIVTILIKLMFF, LPILVQIPVFISLYWVLLGSV, PYFILPVIMGVSMLIQMKLNP, and PVIFTFMFLWFPSGLVLYWVV.

It belongs to the OXA1/ALB3/YidC family. Type 1 subfamily. Interacts with the Sec translocase complex via SecD. Specifically interacts with transmembrane segments of nascent integral membrane proteins during membrane integration.

It is found in the cell inner membrane. Its function is as follows. Required for the insertion and/or proper folding and/or complex formation of integral membrane proteins into the membrane. Involved in integration of membrane proteins that insert both dependently and independently of the Sec translocase complex, as well as at least some lipoproteins. Aids folding of multispanning membrane proteins. The polypeptide is Membrane protein insertase YidC (Aromatoleum aromaticum (strain DSM 19018 / LMG 30748 / EbN1) (Azoarcus sp. (strain EbN1))).